The sequence spans 339 residues: Dihydroorotate dehydrogenase (quinone) (339 aa).

FMN contacts are provided by residues 62–66 (AGMDK) and threonine 86. Substrate is bound at residue lysine 66. Substrate is bound at residue 111 to 115 (NRMGF). 2 residues coordinate FMN: asparagine 139 and asparagine 172. A substrate-binding site is contributed by asparagine 172. Serine 175 serves as the catalytic Nucleophile. Asparagine 177 provides a ligand contact to substrate. Residues lysine 217 and threonine 245 each contribute to the FMN site. Residue 246–247 (NT) participates in substrate binding. FMN contacts are provided by residues glycine 268, glycine 297, and 318–319 (YS).

This sequence belongs to the dihydroorotate dehydrogenase family. Type 2 subfamily. Monomer. Requires FMN as cofactor.

It is found in the cell membrane. The enzyme catalyses (S)-dihydroorotate + a quinone = orotate + a quinol. It functions in the pathway pyrimidine metabolism; UMP biosynthesis via de novo pathway; orotate from (S)-dihydroorotate (quinone route): step 1/1. In terms of biological role, catalyzes the conversion of dihydroorotate to orotate with quinone as electron acceptor. This chain is Dihydroorotate dehydrogenase (quinone), found in Shewanella baltica (strain OS185).